Reading from the N-terminus, the 87-residue chain is Colicin-E7 immunity protein (87 aa).

It belongs to the colicins ColE2/ColE8/ColE9 and pyocins S1/S2 family.

Its function is as follows. This protein is able to protect a cell, which harbors the plasmid ColE7 encoding colicin E7, against colicin E7, it binds specifically to the DNase-type colicin and inhibits its bactericidal activity. Dimeric ImmE7 may possess a RNase activity that cleaves its own mRNA at a specific site and thus autoregulates translational expression of the downstream ceiE7 gene as well as degradation of the upstream ceaE7 mRNA. The polypeptide is Colicin-E7 immunity protein (imm) (Escherichia coli).